Here is a 114-residue protein sequence, read N- to C-terminus: Iron-sulfur cluster insertion protein ErpA (114 aa).

Cys-42, Cys-106, and Cys-108 together coordinate iron-sulfur cluster.

Belongs to the HesB/IscA family. As to quaternary structure, homodimer. Requires iron-sulfur cluster as cofactor.

Functionally, required for insertion of 4Fe-4S clusters for at least IspG. This is Iron-sulfur cluster insertion protein ErpA from Hamiltonella defensa subsp. Acyrthosiphon pisum (strain 5AT).